A 139-amino-acid chain; its full sequence is ATP synthase epsilon chain (139 aa).

The protein belongs to the ATPase epsilon chain family. F-type ATPases have 2 components, CF(1) - the catalytic core - and CF(0) - the membrane proton channel. CF(1) has five subunits: alpha(3), beta(3), gamma(1), delta(1), epsilon(1). CF(0) has three main subunits: a, b and c.

The protein resides in the cell inner membrane. Its function is as follows. Produces ATP from ADP in the presence of a proton gradient across the membrane. This chain is ATP synthase epsilon chain, found in Pseudomonas syringae pv. tomato (strain ATCC BAA-871 / DC3000).